The following is a 76-amino-acid chain: Proteolipid protein 2 (76 aa).

One can recognise an MARVEL domain in the interval I1–T60. A helical transmembrane segment spans residues F8–E28. The N-linked (GlcNAc...) asparagine glycan is linked to N31. The helical transmembrane segment at A36–F56 threads the bilayer.

It localises to the membrane. Its function is as follows. May play a role in cell differentiation in the intestinal epithelium. In Ovis aries (Sheep), this protein is Proteolipid protein 2 (PLP2).